The following is a 313-amino-acid chain: N(5)-(carboxyethyl)ornithine synthase (313 aa).

Arginine 15, lysine 71, and histidine 92 together coordinate pyruvate. Residue 171 to 176 coordinates NADP(+); the sequence is GSGNVA.

Belongs to the AlaDH/PNT family. CEOS subfamily. Homotetramer.

It catalyses the reaction N(5)-[1(S)-1-carboxyethyl]-L-ornithine + NADP(+) + H2O = L-ornithine + pyruvate + NADPH + H(+). Its activity is regulated as follows. Is potently inhibited by the reaction product N(5)-(L-1-carboxyethyl)-L-ornithine. Functionally, catalyzes the NADPH-dependent reductive condensation between pyruvic acid and the side chain amino group of L-ornithine to form N(5)-(L-1-carboxyethyl)-L-ornithine. To a lesser extent, can also use L-lysine as substrate (yielding N(6)-(L-1-carboxyethyl)-L-lysine). NADH cannot replace NADPH in the condensation reaction. This chain is N(5)-(carboxyethyl)ornithine synthase (ceo), found in Lactococcus lactis subsp. lactis (Streptococcus lactis).